We begin with the raw amino-acid sequence, 242 residues long: 7-cyano-7-deazaguanine synthase (242 aa).

12–22 (FSGGQDSTTCL) serves as a coordination point for ATP. Zn(2+)-binding residues include Cys200, Cys215, Cys218, and Cys221.

Belongs to the QueC family. The cofactor is Zn(2+).

It catalyses the reaction 7-carboxy-7-deazaguanine + NH4(+) + ATP = 7-cyano-7-deazaguanine + ADP + phosphate + H2O + H(+). It functions in the pathway purine metabolism; 7-cyano-7-deazaguanine biosynthesis. Catalyzes the ATP-dependent conversion of 7-carboxy-7-deazaguanine (CDG) to 7-cyano-7-deazaguanine (preQ(0)). This is 7-cyano-7-deazaguanine synthase from Nitratidesulfovibrio vulgaris (strain ATCC 29579 / DSM 644 / CCUG 34227 / NCIMB 8303 / VKM B-1760 / Hildenborough) (Desulfovibrio vulgaris).